The primary structure comprises 122 residues: Large ribosomal subunit protein uL14 (122 aa).

The protein belongs to the universal ribosomal protein uL14 family. As to quaternary structure, part of the 50S ribosomal subunit. Forms a cluster with proteins L3 and L19. In the 70S ribosome, L14 and L19 interact and together make contacts with the 16S rRNA in bridges B5 and B8.

Binds to 23S rRNA. Forms part of two intersubunit bridges in the 70S ribosome. The protein is Large ribosomal subunit protein uL14 of Rickettsia typhi (strain ATCC VR-144 / Wilmington).